A 504-amino-acid polypeptide reads, in one-letter code: MKEFKRYLELDRSQQHDFVYPLLFQEYIYVLAHDHGLNRSILLENADYDNKFSLLIVKRLITQMDQQNHLIFSPNDSNQNPFLGHNTNLYSQMILEGFAVVVEIPFSLRLISSLEGKETVKSHKLRSIHSIFPFLEDKFSRLNYVLDILIPHSIHLEILVQTLRYWVKDASSLHLLRFFLHEYRNWNTRITPKESSFSFSKRNQRFFLFLYNFHVCESESIFVFLRNQSSHLRSISSGTFLERIYFYGKIEHFVKVFTKDFQDILWLFKDPFMHYVRYQGNSILASKGTSLLMNKWKYYLVNFWQCYFYMWCQPGRIQINQLSNHSLDFLGYLSSVRLNPSMVRSQMLENSFLIGNAIKKFDTIVPIIPLIGSLYKAKFCNVLGHPVSKPVWADLSDSDIIDRFGRIYRNLSHYHTGSLKKTSLYRIKYILRLSCARTLARKHRSTVRAFLKRLGSELLEEFFTEEEQVFDLTFQETYSTSQGLSRGRIWYLDIICINDLANHE.

This sequence belongs to the intron maturase 2 family. MatK subfamily.

It is found in the plastid. The protein localises to the chloroplast. Usually encoded in the trnK tRNA gene intron. Probably assists in splicing its own and other chloroplast group II introns. The protein is Maturase K of Actinidia deliciosa (Kiwi).